Reading from the N-terminus, the 361-residue chain is Putative agmatine deiminase (361 aa).

Cys-354 serves as the catalytic Amidino-cysteine intermediate.

The protein belongs to the agmatine deiminase family.

The enzyme catalyses agmatine + H2O = N-carbamoylputrescine + NH4(+). This Streptococcus pneumoniae (strain ATCC BAA-255 / R6) protein is Putative agmatine deiminase.